The chain runs to 416 residues: Gamma-glutamyl phosphate reductase (416 aa).

This sequence belongs to the gamma-glutamyl phosphate reductase family.

The protein localises to the cytoplasm. It catalyses the reaction L-glutamate 5-semialdehyde + phosphate + NADP(+) = L-glutamyl 5-phosphate + NADPH + H(+). The protein operates within amino-acid biosynthesis; L-proline biosynthesis; L-glutamate 5-semialdehyde from L-glutamate: step 2/2. In terms of biological role, catalyzes the NADPH-dependent reduction of L-glutamate 5-phosphate into L-glutamate 5-semialdehyde and phosphate. The product spontaneously undergoes cyclization to form 1-pyrroline-5-carboxylate. The protein is Gamma-glutamyl phosphate reductase of Salmonella arizonae (strain ATCC BAA-731 / CDC346-86 / RSK2980).